A 1025-amino-acid polypeptide reads, in one-letter code: Leucyl-cystinyl aminopeptidase (1025 aa).

Met-1 carries the N-acetylmethionine modification. Residues 1-110 (MEPFTNDRLQ…GACSVPSART (110 aa)) are Cytoplasmic-facing. A Dileucine internalization motif motif is present at residues 53 to 54 (LL). Tyr-70 is subject to Phosphotyrosine. Residues 76–77 (LL) carry the Dileucine internalization motif motif. A phosphoserine mark is found at Ser-80 and Ser-91. Positions 96 to 101 (RQSPDG) are tankyrase binding. Residues 111 to 131 (MVVCAFVIVVAVSVIMVIYLL) form a helical; Signal-anchor for type II membrane protein membrane-spanning segment. Residues 132–1025 (PRCTFTKEGC…KNLKSLTWWL (894 aa)) are Extracellular-facing. 5 N-linked (GlcNAc...) asparagine glycosylation sites follow: Asn-145, Asn-184, Asn-215, Asn-256, and Asn-266. Position 295 (Glu-295) interacts with substrate. Residues Asn-368 and Asn-374 are each glycosylated (N-linked (GlcNAc...) asparagine). 428 to 432 (GAMEN) lines the substrate pocket. A glycan (N-linked (GlcNAc...) asparagine) is linked at Asn-448. His-464 lines the Zn(2+) pocket. Glu-465 acts as the Proton acceptor in catalysis. Zn(2+) contacts are provided by His-468 and Glu-487. Residues Asn-525, Asn-578, Asn-598, Asn-664, Asn-682, Asn-760, Asn-834, Asn-850, and Asn-989 are each glycosylated (N-linked (GlcNAc...) asparagine).

This sequence belongs to the peptidase M1 family. In terms of assembly, homodimer. Binds tankyrases 1 and 2. It depends on Zn(2+) as a cofactor. The pregnancy serum form is derived from the membrane-bound form by proteolytic processing. Post-translationally, N-glycosylated. Highly expressed in placenta, heart, kidney and small intestine. Detected at lower levels in neuronal cells in the brain, in skeletal muscle, spleen, liver, testes and colon.

The protein resides in the cell membrane. It is found in the secreted. The catalysed reaction is Release of an N-terminal amino acid, Cys-|-Xaa-, in which the half-cystine residue is involved in a disulfide loop, notably in oxytocin or vasopressin. Hydrolysis rates on a range of aminoacyl arylamides exceed that for the cystinyl derivative, however.. Its function is as follows. Release of an N-terminal amino acid, cleaves before cysteine, leucine as well as other amino acids. Degrades peptide hormones such as oxytocin, vasopressin and angiotensin III, and plays a role in maintaining homeostasis during pregnancy. May be involved in the inactivation of neuronal peptides in the brain. Cleaves Met-enkephalin and dynorphin. Binds angiotensin IV and may be the angiotensin IV receptor in the brain. The protein is Leucyl-cystinyl aminopeptidase (LNPEP) of Homo sapiens (Human).